The following is a 590-amino-acid chain: Putative laccase-19 (590 aa).

Positions 1 to 28 are cleaved as a signal peptide; sequence MEKLSMVTSLLCAITVAVLAVAVVSGEA. 2 consecutive Plastocyanin-like domains span residues 36 to 152 and 161 to 315; these read VVHE…PRDG and KDVP…YAGA. 2 N-linked (GlcNAc...) asparagine glycosylation sites follow: N41 and N47. Residues H86 and H88 each coordinate Cu cation. N-linked (GlcNAc...) asparagine glycosylation occurs at N120. H131 and H133 together coordinate Cu cation. 6 N-linked (GlcNAc...) asparagine glycosylation sites follow: N205, N344, N378, N397, N434, and N465. Positions 424-566 constitute a Plastocyanin-like 3 domain; that stretch reads DFPIRPPRPF…ATAFIVEDGP (143 aa). Cu cation-binding residues include N483, H486, H488, H545, C546, H547, H551, and M556. The tract at residues 565–590 is disordered; the sequence is GPTPETSLPPPPPEFKRCGNNGLSQP.

It belongs to the multicopper oxidase family. Cu cation serves as cofactor.

The protein resides in the secreted. It is found in the extracellular space. Its subcellular location is the apoplast. The catalysed reaction is 4 hydroquinone + O2 = 4 benzosemiquinone + 2 H2O. In terms of biological role, lignin degradation and detoxification of lignin-derived products. This Oryza sativa subsp. indica (Rice) protein is Putative laccase-19 (LAC19).